A 672-amino-acid polypeptide reads, in one-letter code: DNA ligase (672 aa).

NAD(+) is bound by residues 37-41, 86-87, and glutamate 115; these read DAEYD and SL. The N6-AMP-lysine intermediate role is filled by lysine 117. NAD(+)-binding residues include arginine 138, glutamate 172, lysine 288, and lysine 312. Cysteine 406, cysteine 409, cysteine 424, and cysteine 429 together coordinate Zn(2+). The 83-residue stretch at 590–672 folds into the BRCT domain; the sequence is DISSTFAGKT…LQEIQQSKQV (83 aa).

It belongs to the NAD-dependent DNA ligase family. LigA subfamily. Mg(2+) is required as a cofactor. The cofactor is Mn(2+).

The catalysed reaction is NAD(+) + (deoxyribonucleotide)n-3'-hydroxyl + 5'-phospho-(deoxyribonucleotide)m = (deoxyribonucleotide)n+m + AMP + beta-nicotinamide D-nucleotide.. In terms of biological role, DNA ligase that catalyzes the formation of phosphodiester linkages between 5'-phosphoryl and 3'-hydroxyl groups in double-stranded DNA using NAD as a coenzyme and as the energy source for the reaction. It is essential for DNA replication and repair of damaged DNA. In Anoxybacillus flavithermus (strain DSM 21510 / WK1), this protein is DNA ligase.